Reading from the N-terminus, the 203-residue chain is ATP-dependent Clp protease proteolytic subunit (203 aa).

The Nucleophile role is filled by Ser100. His125 is an active-site residue.

Belongs to the peptidase S14 family. Component of the chloroplastic Clp protease core complex.

The protein resides in the plastid. It localises to the chloroplast stroma. It catalyses the reaction Hydrolysis of proteins to small peptides in the presence of ATP and magnesium. alpha-casein is the usual test substrate. In the absence of ATP, only oligopeptides shorter than five residues are hydrolyzed (such as succinyl-Leu-Tyr-|-NHMec, and Leu-Tyr-Leu-|-Tyr-Trp, in which cleavage of the -Tyr-|-Leu- and -Tyr-|-Trp bonds also occurs).. Functionally, cleaves peptides in various proteins in a process that requires ATP hydrolysis. Has a chymotrypsin-like activity. Plays a major role in the degradation of misfolded proteins. The protein is ATP-dependent Clp protease proteolytic subunit of Dioscorea elephantipes (Elephant's foot yam).